The sequence spans 301 residues: Sulfate adenylyltransferase subunit 2 (301 aa).

Belongs to the PAPS reductase family. CysD subfamily. In terms of assembly, heterodimer composed of CysD, the smaller subunit, and CysN.

It carries out the reaction sulfate + ATP + H(+) = adenosine 5'-phosphosulfate + diphosphate. Its pathway is sulfur metabolism; hydrogen sulfide biosynthesis; sulfite from sulfate: step 1/3. Functionally, with CysN forms the ATP sulfurylase (ATPS) that catalyzes the adenylation of sulfate producing adenosine 5'-phosphosulfate (APS) and diphosphate, the first enzymatic step in sulfur assimilation pathway. APS synthesis involves the formation of a high-energy phosphoric-sulfuric acid anhydride bond driven by GTP hydrolysis by CysN coupled to ATP hydrolysis by CysD. The chain is Sulfate adenylyltransferase subunit 2 from Geobacter metallireducens (strain ATCC 53774 / DSM 7210 / GS-15).